Here is a 485-residue protein sequence, read N- to C-terminus: MSLFDHKISELKELLHKKELSVSDLVDESYKRINEVDGKVQAFLALDEEKARAYAKELDEAVGEKDELGLLFGMPIGVKDNIVTKDLRTTASSKILQNFDPIYDATVVNRLRDAEVVTIGKLNMDEFAMGSSTENSGYKATKNPWNLNTVPGGSSGGSAASVAAGEVPFSLGSDTGGSIRQPASFCGVVGLKPTYGRVSRYGLIAFASSLDQIGPITRNVEDNAYVLQAIAGVDQMDATSANVDVPDFLSSLTGDIKGMKIAVPKEYLGEGVGEEAKESVLQALKVLEGLGATWEEVSLPHSKYALATYYLLSSSEASANLARFDGIRYGYRTDNAENLIDLYKNTRSEGFGNEVKRRIMLGTFALSSGYYDAYYKKAQKVRTLIKKDFEDVFEKYDVIVGPTTPTPAFKIGEKTSDPLTMYANDILTIPVNLAGVPGISVPCGFANGLPLGLQIIGKHFDEGTVYRVAHAFEQATDHHKAKPEL.

Active-site charge relay system residues include lysine 79 and serine 154. Serine 178 (acyl-ester intermediate) is an active-site residue.

It belongs to the amidase family. GatA subfamily. As to quaternary structure, heterotrimer of A, B and C subunits.

It catalyses the reaction L-glutamyl-tRNA(Gln) + L-glutamine + ATP + H2O = L-glutaminyl-tRNA(Gln) + L-glutamate + ADP + phosphate + H(+). Allows the formation of correctly charged Gln-tRNA(Gln) through the transamidation of misacylated Glu-tRNA(Gln) in organisms which lack glutaminyl-tRNA synthetase. The reaction takes place in the presence of glutamine and ATP through an activated gamma-phospho-Glu-tRNA(Gln). The sequence is that of Glutamyl-tRNA(Gln) amidotransferase subunit A from Bacillus pumilus (strain SAFR-032).